A 239-amino-acid chain; its full sequence is MNLYEYLSQGIKHFTLIDPDKSVDYLRIARYALEAGTDGILVGGSLGITASQMEKVVKDIKSVANVPVVLFPGSLSQLTDAADGVLFLSVLNSLDPYFIIGAQVHGAVLIAKHYPRLEVISTAYVIVGDGGAAGFVSMSKPIPYTRPDIATAYALAAGYIGFKALYLEAGSGAPQPVPPDMVRAVRKAFPRVLIVGGGIRSSEVARSIAREGPNVIVTGTLAEESPEKLGEIVRAIKQR.

Mg(2+)-binding residues include D18 and S45. Sn-glycerol 1-phosphate contacts are provided by residues 166 to 172 (YLEAGSG), 197 to 198 (GG), and 219 to 220 (GT).

It belongs to the GGGP/HepGP synthase family. Group II subfamily. Mg(2+) is required as a cofactor.

The protein resides in the cytoplasm. It carries out the reaction sn-glycerol 1-phosphate + (2E,6E,10E)-geranylgeranyl diphosphate = sn-3-O-(geranylgeranyl)glycerol 1-phosphate + diphosphate. It functions in the pathway membrane lipid metabolism; glycerophospholipid metabolism. Functionally, prenyltransferase that catalyzes the transfer of the geranylgeranyl moiety of geranylgeranyl diphosphate (GGPP) to the C3 hydroxyl of sn-glycerol-1-phosphate (G1P). This reaction is the first ether-bond-formation step in the biosynthesis of archaeal membrane lipids. This Pyrobaculum arsenaticum (strain DSM 13514 / JCM 11321 / PZ6) protein is Geranylgeranylglyceryl phosphate synthase.